The chain runs to 391 residues: MTQVPNRETPRGIAILARFLASESAGGIVLMVAALAALIVANSPLSAGYFSILHSVWLGLSVELWINDGLMAIFFLMVGLEIKREVLAGGLASWGQRALPGFAAAGGMLVPALIYIAINWGNPQTLSGWAIPAATDIAFALGVLSLLGNRVPTSLKVFLAALAILDDLGAVTIIAFFYSAGLNLPMLAAAFVTLAVLIVMNRLNVRRLLPYLLLGALLWFFVLQSGVHATLAGVALALCIPMGKPEEEARSPLLFLEEKMHYWVAFAVVPIFGFANAGVSLAGITLGNLVDPVPLGVALGLFVGKQIGVFLAAVLAIRAGLAVLPEGSNWVQLYGVAMLCGIGFTMSLFIGNLAFPGSQHLIDEVKVGVLIGSGLAAIAGIVLLRSRFSRP.

A run of 11 helical transmembrane segments spans residues 25–45 (AGGI…NSPL), 56–76 (VWLG…IFFL), 98–118 (ALPG…YIAI), 128–148 (GWAI…SLLG), 157–177 (VFLA…IAFF), 180–200 (AGLN…LIVM), 208–228 (LLPY…SGVH), 264–284 (VAFA…LAGI), 297–317 (VALG…VLAI), 335–355 (GVAM…NLAF), and 364–384 (EVKV…IVLL).

This sequence belongs to the NhaA Na(+)/H(+) (TC 2.A.33) antiporter family.

Its subcellular location is the cell inner membrane. It carries out the reaction Na(+)(in) + 2 H(+)(out) = Na(+)(out) + 2 H(+)(in). Functionally, na(+)/H(+) antiporter that extrudes sodium in exchange for external protons. In Pseudomonas syringae pv. syringae (strain B728a), this protein is Na(+)/H(+) antiporter NhaA 1.